The chain runs to 943 residues: TBC1 domain family member 2B (943 aa).

Residues 1 to 29 form a disordered region; that stretch reads MPGVEDPCDSQGTPPEEPSTSVAPGEAAK. Positions 10 to 22 are enriched in polar residues; sequence SQGTPPEEPSTSV. The PH domain maps to 32–129; sequence SPRLCGYLAK…WLQELQQKRW (98 aa). Positions 315 to 514 form a coiled coil; the sequence is RMESDVLLKL…ARYSNLEAKM (200 aa). The Rab-GAP TBC domain maps to 642-836; that stretch reads GIPHEHRSRM…RIWDSLLYEG (195 aa).

The protein localises to the early endosome. In terms of biological role, GTPase-activating protein that plays a role in the early steps of endocytosis. The protein is TBC1 domain family member 2B (tbc1d2b) of Xenopus tropicalis (Western clawed frog).